We begin with the raw amino-acid sequence, 298 residues long: Probable phosphoserine phosphatase (298 aa).

The active-site Nucleophile is the Asp82. The Mg(2+) site is built by Asp82 and Asp84. Asp84 acts as the Proton donor in catalysis. Residues Glu91, Arg127, 170 to 171 (SG), and Lys217 contribute to the substrate site. Asp240 serves as a coordination point for Mg(2+). Asn243 contributes to the substrate binding site.

Belongs to the HAD-like hydrolase superfamily. SerB family. It depends on Mg(2+) as a cofactor.

The enzyme catalyses O-phospho-L-serine + H2O = L-serine + phosphate. It carries out the reaction O-phospho-D-serine + H2O = D-serine + phosphate. The protein operates within amino-acid biosynthesis; L-serine biosynthesis; L-serine from 3-phospho-D-glycerate: step 3/3. The polypeptide is Probable phosphoserine phosphatase (Schizosaccharomyces pombe (strain 972 / ATCC 24843) (Fission yeast)).